The sequence spans 194 residues: Probable nicotinate-nucleotide adenylyltransferase (194 aa).

The protein belongs to the NadD family.

The catalysed reaction is nicotinate beta-D-ribonucleotide + ATP + H(+) = deamido-NAD(+) + diphosphate. It functions in the pathway cofactor biosynthesis; NAD(+) biosynthesis; deamido-NAD(+) from nicotinate D-ribonucleotide: step 1/1. Its function is as follows. Catalyzes the reversible adenylation of nicotinate mononucleotide (NaMN) to nicotinic acid adenine dinucleotide (NaAD). The polypeptide is Probable nicotinate-nucleotide adenylyltransferase (Chlorobium luteolum (strain DSM 273 / BCRC 81028 / 2530) (Pelodictyon luteolum)).